The following is a 257-amino-acid chain: Zinc transporter ZupT (257 aa).

Transmembrane regions (helical) follow at residues 5 to 25 (LILT…GVLG), 32 to 52 (LLAF…LMEM), and 61 to 81 (GMSP…YFGL). Residues N120 and E123 each coordinate Fe(2+). Zn(2+)-binding residues include E123 and H148. 4 helical membrane passes run 137–157 (LGFG…LAVA), 171–191 (ILWA…AWLI), 195–215 (MISP…MVAL), and 236–256 (GVLC…TVGI). Residues N149, E152, and E181 each coordinate Fe(2+). E152 lines the Zn(2+) pocket.

The protein belongs to the ZIP transporter (TC 2.A.5) family. ZupT subfamily.

It is found in the cell inner membrane. The enzyme catalyses Zn(2+)(in) = Zn(2+)(out). Functionally, mediates zinc uptake. May also transport other divalent cations. The protein is Zinc transporter ZupT of Escherichia coli O81 (strain ED1a).